We begin with the raw amino-acid sequence, 336 residues long: Calcium uniporter regulatory subunit MCUb, mitochondrial (336 aa).

The N-terminal 35 residues, 1-35 (MLQRGLWPWRTRLLPTPGTWRPARPWPLPPPPQVL), are a transit peptide targeting the mitochondrion. A coiled-coil region spans residues 179 to 210 (ESQKKREHHLLEKIDHLKEQLQPLEQVKAGIE). A run of 2 helical transmembrane segments spans residues 220-240 (LLWA…WLTW) and 250-270 (PVTY…FIVT). Residues 297 to 323 (FDVQQYNKLKEDLAKAKESLKQARHSL) are a coiled coil.

The protein belongs to the MCU (TC 1.A.77) family. As to quaternary structure, homooligomer. Associates with the uniplex complex, composed of MCU, MICU1, MICU2 and EMRE/SMDT1, inhibiting its activity.

It is found in the mitochondrion inner membrane. Negative regulator of the mitochondrial calcium uniporter (MCU), a channel that mediates calcium uptake into the mitochondrial matrix. MCUB is required to limit mitochondrial calcium overload during stress. Acts as a dominant-negative regulator that displaces MCU from the functional uniplex complex and thereby decreases the association of calcium sensors MICU1 and MICU2, preventing channel gating. Mitochondrial calcium homeostasis plays key roles in mitochondrial metabolism. Acts as an important regulator of mitochondrial metabolism in response to stress in muscle cells: induced in response to fasting, leading to restrict mitochondrial calcium uptake, resulting in reprogramming of mitochondria toward fatty acid oxidation preference. Acts as a regulator of macrophage polarization during skeletal muscle regeneration: inhibition of mitochondrial calcium uptake drives differentiation of macrophages with anti-inflammatory profile, promoting the differentiation and fusion of satellite cells. This is Calcium uniporter regulatory subunit MCUb, mitochondrial from Homo sapiens (Human).